The following is a 272-amino-acid chain: Leucoagglutinating phytohemagglutinin (272 aa).

Positions 1-20 (MASSKFFTVLFLVLLTHANS) are cleaved as a signal peptide. N32 carries an N-linked (GlcNAc...) (high mannose) asparagine glycan. A glycan (N-linked (GlcNAc...) (complex) asparagine) is linked at N80.

Belongs to the leguminous lectin family. In terms of assembly, homotetramer. In terms of processing, N-glycosylated on Asn-80; contains xylose.

Functionally, this insecticidal carbohydrate-binding lectin is toxic for the cowpea weevil. The chain is Leucoagglutinating phytohemagglutinin (DLEC2) from Phaseolus vulgaris (Kidney bean).